The chain runs to 265 residues: Phosphate import ATP-binding protein PstB 1 (265 aa).

The ABC transporter domain maps to 20–260 (LSTNDLSVLY…PKGKITEDYI (241 aa)). Residue 53–60 (GASGSGKS) participates in ATP binding.

It belongs to the ABC transporter superfamily. Phosphate importer (TC 3.A.1.7) family. In terms of assembly, the complex is composed of two ATP-binding proteins (PstB), two transmembrane proteins (PstC and PstA) and a solute-binding protein (PstS).

Its subcellular location is the cell membrane. It catalyses the reaction phosphate(out) + ATP + H2O = ADP + 2 phosphate(in) + H(+). Functionally, part of the ABC transporter complex PstSACB involved in phosphate import. Responsible for energy coupling to the transport system. The chain is Phosphate import ATP-binding protein PstB 1 from Lactobacillus acidophilus (strain ATCC 700396 / NCK56 / N2 / NCFM).